The chain runs to 137 residues: Histone H2B.4 (137 aa).

Positions 1-37 are enriched in basic and acidic residues; sequence MAPKAEKKPAEKKPTEEKAEKKPRAEKRVPGKEGGEK. The disordered stretch occupies residues 1 to 45; the sequence is MAPKAEKKPAEKKPTEEKAEKKPRAEKRVPGKEGGEKKGKKKAKK. An N6-acetyllysine mark is found at Lys-7 and Lys-27. Lys-133 is covalently cross-linked (Glycyl lysine isopeptide (Lys-Gly) (interchain with G-Cter in ubiquitin)).

It belongs to the histone H2B family. In terms of assembly, the nucleosome is a histone octamer containing two molecules each of H2A, H2B, H3 and H4 assembled in one H3-H4 heterotetramer and two H2A-H2B heterodimers. The octamer wraps approximately 147 bp of DNA. Can be acetylated to form H2BK6ac and H2BK33ac. In terms of processing, monoubiquitinated to form H2BK143ub1; may give a specific tag for epigenetic transcriptional activation.

Its subcellular location is the nucleus. It is found in the chromosome. Functionally, core component of nucleosome. Nucleosomes wrap and compact DNA into chromatin, limiting DNA accessibility to the cellular machineries which require DNA as a template. Histones thereby play a central role in transcription regulation, DNA repair, DNA replication and chromosomal stability. DNA accessibility is regulated via a complex set of post-translational modifications of histones, also called histone code, and nucleosome remodeling. This is Histone H2B.4 from Zea mays (Maize).